Reading from the N-terminus, the 734-residue chain is MASRFPKFSRGLSQDPTTRRIWFGIATAHDFESHDDMTEERLYQKIFASHFGQLAIIFLWTSGNLFHVAWQGNFEAWGQDPLHVRPIAHAIWDPHFGQPAVEAFTRGGASGPVNIAYSGVYQWWYTIGLRTNQDLYGGSIFLLFVSALFLIAGWLHLQPKWKPSVSWFKNAESRLNHHLSGLFGVSSLAWTGHLVHVAIPESRGEHVRWNNLLTALPHPQGLGPFFAGQWNVYAQNPDSNSHLFGTSEGAGTAILTFLGGFHPQTQSLWLTDMAHHHLAIAVIFIIAGHMYRTNFGIGHSMKEILEAHTPPGGRLGRGHKGLYDTINNSLHFQLGLALASLGVITSLVAQHMYSLPPYAFLAQDFTTQAALYTHHQYIAGFIMTGAFAHGAIFFIRDYNPEQNKDNVLARMLEHKEAIISHLSWASLFLGFHTLGLYVHNDVMLAFGTPEKQILIEPVFAQWIQSAHGKALYGFDVLLSSADSPAFNAGQTLWLPGWLDAINNNSNSLFLTIGPGDFLVHHAIALGLHTTTLILVKGALDARGSKLMPDKKEFGYSFPCDGPGRGGTCDISAWDAFYLAVFWMLNTIGWVTFYWHWKHITLWQGNVAQFNESSTYLMGWLRDYLWLNSSQLINGYNPFGMNSLSVWAWMFLFGHLVWATGFMFLISWRGYWQELIETLAWAHERTPLANLVRWKDKPVALSIVQARLVGLAHFSVGYIFTYAAFLIASTSGKFG.

Helical transmembrane passes span I46–A69, L135–Q158, L175–I199, M273–Y291, L330–Y353, A369–I395, A417–H439, and F517–V535. Positions 559 and 568 each coordinate [4Fe-4S] cluster. The next 2 helical transmembrane spans lie at A575–W596 and L643–I665. H654, M662, and Y670 together coordinate chlorophyll a. W671 serves as a coordination point for phylloquinone. The helical transmembrane segment at L707 to A727 threads the bilayer.

This sequence belongs to the PsaA/PsaB family. In terms of assembly, the PsaA/B heterodimer binds the P700 chlorophyll special pair and subsequent electron acceptors. PSI consists of a core antenna complex that captures photons, and an electron transfer chain that converts photonic excitation into a charge separation. The eukaryotic PSI reaction center is composed of at least 11 subunits. P700 is a chlorophyll a/chlorophyll a' dimer, A0 is one or more chlorophyll a, A1 is one or both phylloquinones and FX is a shared 4Fe-4S iron-sulfur center. is required as a cofactor.

The protein localises to the plastid. It is found in the chloroplast thylakoid membrane. The enzyme catalyses reduced [plastocyanin] + hnu + oxidized [2Fe-2S]-[ferredoxin] = oxidized [plastocyanin] + reduced [2Fe-2S]-[ferredoxin]. Its function is as follows. PsaA and PsaB bind P700, the primary electron donor of photosystem I (PSI), as well as the electron acceptors A0, A1 and FX. PSI is a plastocyanin-ferredoxin oxidoreductase, converting photonic excitation into a charge separation, which transfers an electron from the donor P700 chlorophyll pair to the spectroscopically characterized acceptors A0, A1, FX, FA and FB in turn. Oxidized P700 is reduced on the lumenal side of the thylakoid membrane by plastocyanin. This is Photosystem I P700 chlorophyll a apoprotein A2 from Physcomitrium patens (Spreading-leaved earth moss).